A 587-amino-acid chain; its full sequence is Glutaconyl-CoA decarboxylase subunit alpha (587 aa).

Positions 31–298 constitute a CoA carboxyltransferase N-terminal domain; that stretch reads LKKIEEEIHQ…YDPEFFRVDD (268 aa). A carboxyltransferase region spans residues 31 to 558; that stretch reads LKKIEEEIHQ…RGYVEAFTEA (528 aa). In terms of domain architecture, CoA carboxyltransferase C-terminal spans 295 to 558; it reads RVDDPKAPAF…RGYVEAFTEA (264 aa).

As to quaternary structure, heterooctamer consisting of two alpha, two beta, two gamma and two delta subunits.

The catalysed reaction is (2E)-glutaconyl-CoA + Na(+)(in) + H(+) = (2E)-butenoyl-CoA + Na(+)(out) + CO2. The protein operates within amino-acid degradation; L-glutamate degradation via hydroxyglutarate pathway; crotonoyl-CoA from L-glutamate: step 5/5. Decarboxylase subunit of the primary sodium pump glutaconyl-CoA decarboxylase (GCD). The protein is Glutaconyl-CoA decarboxylase subunit alpha (gcdA) of Acidaminococcus fermentans (strain ATCC 25085 / DSM 20731 / CCUG 9996 / CIP 106432 / VR4).